The following is a 343-amino-acid chain: Protein RecA (343 aa).

66 to 73 (GPESSGKT) serves as a coordination point for ATP.

This sequence belongs to the RecA family.

It localises to the cytoplasm. In terms of biological role, can catalyze the hydrolysis of ATP in the presence of single-stranded DNA, the ATP-dependent uptake of single-stranded DNA by duplex DNA, and the ATP-dependent hybridization of homologous single-stranded DNAs. It interacts with LexA causing its activation and leading to its autocatalytic cleavage. The chain is Protein RecA from Rickettsia bellii (strain RML369-C).